Reading from the N-terminus, the 381-residue chain is Transcriptional regulatory protein FlgR (381 aa).

Positions 2–113 (KIAIVEDDIN…LLLESIYRTK (112 aa)) constitute a Response regulatory domain. Position 51 is a 4-aspartylphosphate (Asp-51). The Sigma-54 factor interaction domain occupies 136-365 (FLAASKALEE…LLGVVERAAI (230 aa)). ATP is bound by residues 164-171 (GESGVGKE) and 227-236 (ANKGTIFLDE).

In terms of processing, phosphorylated by FlgS.

Functionally, member of the two-component regulatory system FlgR/FlgS that induces the transcriptional induction of the genes needed in motility and flagellar biogenesis. Upon phosphorylation by FlgS, functions as a transcriptional regulator and activates transcription of RpoN-dependent flagellar genes. The protein is Transcriptional regulatory protein FlgR (flgR) of Helicobacter pylori (strain ATCC 700392 / 26695) (Campylobacter pylori).